The sequence spans 338 residues: Glycerol-3-phosphate dehydrogenase [NAD(P)+] (338 aa).

Residues serine 13, tryptophan 14, and lysine 108 each contribute to the NADPH site. 3 residues coordinate sn-glycerol 3-phosphate: lysine 108, glycine 139, and serine 141. Alanine 143 contributes to the NADPH binding site. Sn-glycerol 3-phosphate-binding residues include lysine 194, aspartate 247, serine 257, arginine 258, and asparagine 259. The Proton acceptor role is filled by lysine 194. Arginine 258 contributes to the NADPH binding site. The NADPH site is built by valine 282 and glutamate 284.

It belongs to the NAD-dependent glycerol-3-phosphate dehydrogenase family.

The protein resides in the cytoplasm. The catalysed reaction is sn-glycerol 3-phosphate + NAD(+) = dihydroxyacetone phosphate + NADH + H(+). The enzyme catalyses sn-glycerol 3-phosphate + NADP(+) = dihydroxyacetone phosphate + NADPH + H(+). It participates in membrane lipid metabolism; glycerophospholipid metabolism. Catalyzes the reduction of the glycolytic intermediate dihydroxyacetone phosphate (DHAP) to sn-glycerol 3-phosphate (G3P), the key precursor for phospholipid synthesis. The chain is Glycerol-3-phosphate dehydrogenase [NAD(P)+] from Streptococcus pneumoniae (strain Hungary19A-6).